The primary structure comprises 433 residues: 3-phosphoshikimate 1-carboxyvinyltransferase (433 aa).

3-phosphoshikimate-binding residues include Lys22, Ser23, and Arg27. Lys22 is a phosphoenolpyruvate binding site. Residues Gly94 and Arg123 each contribute to the phosphoenolpyruvate site. Residues Ser168, Gln170, Asp319, and Lys346 each coordinate 3-phosphoshikimate. Gln170 contributes to the phosphoenolpyruvate binding site. Residue Asp319 is the Proton acceptor of the active site. Phosphoenolpyruvate-binding residues include Arg350 and Arg392.

Belongs to the EPSP synthase family. As to quaternary structure, monomer.

Its subcellular location is the cytoplasm. It catalyses the reaction 3-phosphoshikimate + phosphoenolpyruvate = 5-O-(1-carboxyvinyl)-3-phosphoshikimate + phosphate. The protein operates within metabolic intermediate biosynthesis; chorismate biosynthesis; chorismate from D-erythrose 4-phosphate and phosphoenolpyruvate: step 6/7. Functionally, catalyzes the transfer of the enolpyruvyl moiety of phosphoenolpyruvate (PEP) to the 5-hydroxyl of shikimate-3-phosphate (S3P) to produce enolpyruvyl shikimate-3-phosphate and inorganic phosphate. This chain is 3-phosphoshikimate 1-carboxyvinyltransferase, found in Roseiflexus sp. (strain RS-1).